The chain runs to 198 residues: MEVILLERVAKLGQMGEVVKVKHGFARNFLLPRGKALRATTDNRAKYEHMKADLEARNIEAKAEAIKVAEKIDGRNVVVLRQASETGQLFGSVTVRDIISQFTADGVHIERSQVLLDHPVKTIGKHSISIAVHPEVEVSVSVTVARSALEAERINRGEDISTRQEDQDAAAEALAAAGEFFDPEAHNDGEQEEEAGDK.

Residues arginine 156–aspartate 166 are compositionally biased toward basic and acidic residues. Residues arginine 156–lysine 198 are disordered.

The protein belongs to the bacterial ribosomal protein bL9 family.

Functionally, binds to the 23S rRNA. This is Large ribosomal subunit protein bL9 from Rhodopseudomonas palustris (strain BisB18).